Consider the following 149-residue polypeptide: Transcriptional regulator MraZ (149 aa).

SpoVT-AbrB domains follow at residues 7 to 54 and 83 to 126; these read KYVN…GISH and AVQL…QPQN.

This sequence belongs to the MraZ family. In terms of assembly, forms oligomers.

The protein resides in the cytoplasm. It is found in the nucleoid. This Rickettsia peacockii (strain Rustic) protein is Transcriptional regulator MraZ.